A 285-amino-acid chain; its full sequence is Probable endonuclease 4 (285 aa).

Zn(2+) contacts are provided by histidine 69, histidine 109, glutamate 145, aspartate 179, histidine 182, histidine 216, aspartate 229, histidine 231, and glutamate 261.

This sequence belongs to the AP endonuclease 2 family. Zn(2+) is required as a cofactor.

It catalyses the reaction Endonucleolytic cleavage to 5'-phosphooligonucleotide end-products.. Endonuclease IV plays a role in DNA repair. It cleaves phosphodiester bonds at apurinic or apyrimidinic (AP) sites, generating a 3'-hydroxyl group and a 5'-terminal sugar phosphate. The polypeptide is Probable endonuclease 4 (Shigella boydii serotype 18 (strain CDC 3083-94 / BS512)).